The chain runs to 102 residues: Envelope protein US9 (102 aa).

Topologically, residues 1-75 are intravirion; the sequence is MAGQNTMEGE…KIYHRKKFCY (75 aa). The Di-leucine internalization motif signature appears at 14–15; it reads LL. The acidic stretch occupies residues 41–55; the sequence is EKCYYSDSENETADE. Phosphoserine; by host CK2 occurs at positions 46 and 48. A helical; Signal-anchor for type II membrane protein membrane pass occupies residues 76–96; that stretch reads ITLIIVFVFAMTGAAFALGYI. Residues 97-102 are Virion surface-facing; it reads TSQFVG.

It belongs to the alphaherpesvirinae envelope protein US9 family. Post-translationally, phosphorylated on serines within the acidic cluster, possibly by host CK2. Phosphorylation determines whether endocytosed viral US9 traffics to the trans-Golgi network or recycles to the cell membrane.

Its subcellular location is the virion membrane. The protein localises to the host Golgi apparatus membrane. The protein resides in the host Golgi apparatus. It is found in the host trans-Golgi network. It localises to the host cell membrane. Its function is as follows. Essential for the anterograde spread of the infection throughout the host nervous system. Together with the gE/gI heterodimer, US9 is involved in the sorting and transport of viral structural components toward axon tips. This chain is Envelope protein US9, found in Varicella-zoster virus (strain Dumas) (HHV-3).